A 1270-amino-acid polypeptide reads, in one-letter code: DNA-directed RNA polymerase subunit beta (1270 aa).

Belongs to the RNA polymerase beta chain family. The RNAP catalytic core consists of 2 alpha, 1 beta, 1 beta' and 1 omega subunit. When a sigma factor is associated with the core the holoenzyme is formed, which can initiate transcription.

It carries out the reaction RNA(n) + a ribonucleoside 5'-triphosphate = RNA(n+1) + diphosphate. Functionally, DNA-dependent RNA polymerase catalyzes the transcription of DNA into RNA using the four ribonucleoside triphosphates as substrates. The chain is DNA-directed RNA polymerase subunit beta from Flavobacterium psychrophilum (strain ATCC 49511 / DSM 21280 / CIP 103535 / JIP02/86).